We begin with the raw amino-acid sequence, 1502 residues long: Gem-associated protein 5 (1502 aa).

An important for interaction with U1 snRNA region spans residues 1-124 (MKPEPRTLPP…LHWSPTVKDL (124 aa)). Residues 13–15 (NWY) form an interaction with U4 snRNA region. Phosphoserine is present on S48. WD repeat units follow at residues 62–104 (GHTE…VVTE), 107–148 (LHQH…QHLF), 150–189 (EPRT…EVIH), 193–264 (GHDD…GVMV), 280–321 (TVKE…RRKY), 333–374 (HSRI…CCWT), 377–417 (SLGG…NNYD), 424–464 (GVKS…PPQI), 468–509 (YHKK…VVLQ), 533–573 (RYKL…LLCT), and 576–622 (QHHK…ESNP). S624 carries the phosphoserine modification. 2 WD repeats span residues 637–677 (GHTA…PLFN) and 680–720 (GHRG…HSRP). Disordered regions lie at residues 740 to 797 (KLKK…SPVV) and 819 to 838 (SSKA…EALL). A Glycyl lysine isopeptide (Lys-Gly) (interchain with G-Cter in SUMO2) cross-link involves residue K754. A phosphoserine mark is found at S757, S770, and S778. Residues 825–838 (LKKEPAKEKPEALL) show a composition bias toward basic and acidic residues. Position 845 is a phosphoserine (S845). 2 disordered regions span residues 1309-1338 (VSDK…LSAE) and 1378-1427 (HQKS…SLPE). The stretch at 1355 to 1382 (ASLQTSQRTVAEVQETLAEMIRQHQKSQ) forms a coiled coil. Residues 1380 to 1391 (KSQLCKATTNGP) are compositionally biased toward polar residues. Basic and acidic residues predominate over residues 1392–1407 (SRDEPSRDEPSQEAER).

Belongs to the WD repeat gemin-5 family. Part of the core SMN complex that contains SMN1, GEMIN2/SIP1, DDX20/GEMIN3, GEMIN4, GEMIN5, GEMIN6, GEMIN7, GEMIN8 and STRAP/UNRIP. Part of the SMN-Sm complex that contains SMN1, GEMIN2/SIP1, DDX20/GEMIN3, GEMIN4, GEMIN5, GEMIN6, GEMIN7, GEMIN8, STRAP/UNRIP and the Sm proteins SNRPB, SNRPD1, SNRPD2, SNRPD3, SNRPE, SNRPF and SNRPG. Interacts directly with SMN1, SNRPB, SNRPD1, SNRPD2, SNRPD3 and SNRPE. Identified in a SMN complex that contains GEMIN2/SIP1. Interacts with cytosolic DDX20/GEMIN3 and GEMIN4. Interacts with SNRNP70 and HNRNPU. Identified in a complex with 80S ribosomes; binds to the 60S large ribosomal subunit. Interacts with the ribosomal subunits RPL3 and RPL4.

The protein resides in the nucleus. It is found in the nucleoplasm. The protein localises to the gem. It localises to the cytoplasm. Its function is as follows. The SMN complex catalyzes the assembly of small nuclear ribonucleoproteins (snRNPs), the building blocks of the spliceosome, and thereby plays an important role in the splicing of cellular pre-mRNAs. Most spliceosomal snRNPs contain a common set of Sm proteins SNRPB, SNRPD1, SNRPD2, SNRPD3, SNRPE, SNRPF and SNRPG that assemble in a heptameric protein ring on the Sm site of the small nuclear RNA to form the core snRNP (Sm core). In the cytosol, the Sm proteins SNRPD1, SNRPD2, SNRPE, SNRPF and SNRPG are trapped in an inactive 6S pICln-Sm complex by the chaperone CLNS1A that controls the assembly of the core snRNP. To assemble core snRNPs, the SMN complex accepts the trapped 5Sm proteins from CLNS1A forming an intermediate. Binding of snRNA inside 5Sm ultimately triggers eviction of the SMN complex, thereby allowing binding of SNRPD3 and SNRPB to complete assembly of the core snRNP. Within the SMN complex, GEMIN5 recognizes and delivers the small nuclear RNAs (snRNAs) to the SMN complex. Binds to the 7-methylguanosine cap of RNA molecules. Binds to the 3'-UTR of SMN1 mRNA and regulates its translation; does not affect mRNA stability. May play a role in the regulation of protein synthesis via its interaction with ribosomes. This is Gem-associated protein 5 (Gemin5) from Mus musculus (Mouse).